The chain runs to 168 residues: Acetolactate synthase small subunit (168 aa).

Positions 7-82 (TLSVLVEDKP…VIKIVEQDDE (76 aa)) constitute an ACT domain.

It belongs to the acetolactate synthase small subunit family. Dimer of large and small chains.

It carries out the reaction 2 pyruvate + H(+) = (2S)-2-acetolactate + CO2. It participates in amino-acid biosynthesis; L-isoleucine biosynthesis; L-isoleucine from 2-oxobutanoate: step 1/4. Its pathway is amino-acid biosynthesis; L-valine biosynthesis; L-valine from pyruvate: step 1/4. The sequence is that of Acetolactate synthase small subunit (ilvH) from Mycobacterium bovis (strain ATCC BAA-935 / AF2122/97).